The primary structure comprises 236 residues: Ascorbate-specific transmembrane electron transporter 2 (236 aa).

The Cytoplasmic segment spans residues 1-13 (MGLGLGVRAAPFT). A helical transmembrane segment spans residues 14–34 (YAAHALAVAAAAMVLVWAIYF). One can recognise a Cytochrome b561 domain in the interval 15–219 (AAHALAVAAA…FGASVVVAAI (205 aa)). Residues 35–50 (RGGLAIEATNKNLIFN) lie on the Extracellular side of the membrane. Residues 51 to 71 (VHPVLMLIGYIIIGGEAIMVY) traverse the membrane as a helical segment. Histidine 52 contacts heme b. 67-75 (AIMVYRVLP) is an L-ascorbate binding site. Residues 72 to 84 (RVLPTSNHETNKL) are Cytoplasmic-facing. A helical membrane pass occupies residues 85-105 (IHLVLHGIALVLGAVGIYFAF). Positions 86 and 120 each coordinate heme b. At 106 to 122 (KNHNESGIANLYSLHSW) the chain is on the extracellular side. Position 116–125 (116–125 (LYSLHSWIGI)) interacts with monodehydro-L-ascorbate radical. The chain crosses the membrane as a helical span at residues 123–143 (IGIGTITLYGIQWIVGFVTFF). Over 144–153 (FPGAAPNVKK) the chain is Cytoplasmic. A helical membrane pass occupies residues 154 to 174 (GVLPWHILFGLFVYILALANA). Position 159 (histidine 159) interacts with heme b. The Extracellular portion of the chain corresponds to 175–201 (ELGFLEKLTFLESSGLDKYGTEAFLVN). The helical transmembrane segment at 202 to 222 (FTALVVVLFGASVVVAAIAPV) threads the bilayer. The Cytoplasmic segment spans residues 223–236 (RLEEPQGYVPIPEN).

Heme b serves as cofactor.

It localises to the membrane. Two-heme-containing cytochrome. Catalyzes ascorbate-dependent trans-membrane electron transfer by utilizing a concerted H(+)/e(-) transfer mechanism. The protein is Ascorbate-specific transmembrane electron transporter 2 of Zea mays (Maize).